Reading from the N-terminus, the 447-residue chain is Protein O-GlcNAcase (447 aa).

A GH84 domain is found at 1 to 277; the sequence is MLTGVIEGFY…TTGAYLADPD (277 aa). A protein is bound by residues Gly8, Lys39, and Asp115. Residue Asp116 is the Proton donor of the active site. A protein is bound by residues Tyr160, 219-221, Asp226, and Asn254; that span reads WDN.

It belongs to the glycosyl hydrolase 84 family.

The catalysed reaction is 3-O-(N-acetyl-beta-D-glucosaminyl)-L-seryl-[protein] + H2O = N-acetyl-D-glucosamine + L-seryl-[protein]. The enzyme catalyses 3-O-(N-acetyl-beta-D-glucosaminyl)-L-threonyl-[protein] + H2O = L-threonyl-[protein] + N-acetyl-D-glucosamine. Its activity is regulated as follows. Inhibited by PUGNac (O-(2-acetamido-2-deoxy-D-glucopyranosylidene)amino-N-phenylcarbamate). Functionally, cleaves GlcNAc from O-glycosylated proteins. Can use p-nitrophenyl-beta-GlcNAc and 4-methylumbelliferone-GlcNAc as substrate (in vitro). This chain is Protein O-GlcNAcase, found in Oceanicola granulosus (strain ATCC BAA-861 / DSM 15982 / KCTC 12143 / HTCC2516).